A 219-amino-acid polypeptide reads, in one-letter code: Ribose-5-phosphate isomerase A (219 aa).

Residues 28-31 (TGST), 81-84 (DGAD), and 94-97 (KGGG) each bind substrate. Glutamate 103 functions as the Proton acceptor in the catalytic mechanism. Residue lysine 121 participates in substrate binding.

The protein belongs to the ribose 5-phosphate isomerase family. As to quaternary structure, homodimer.

The catalysed reaction is aldehydo-D-ribose 5-phosphate = D-ribulose 5-phosphate. It participates in carbohydrate degradation; pentose phosphate pathway; D-ribose 5-phosphate from D-ribulose 5-phosphate (non-oxidative stage): step 1/1. Its function is as follows. Catalyzes the reversible conversion of ribose-5-phosphate to ribulose 5-phosphate. This Shewanella pealeana (strain ATCC 700345 / ANG-SQ1) protein is Ribose-5-phosphate isomerase A.